A 106-amino-acid chain; its full sequence is Large ribosomal subunit protein bL21 (106 aa).

It belongs to the bacterial ribosomal protein bL21 family. As to quaternary structure, part of the 50S ribosomal subunit. Contacts protein L20.

Functionally, this protein binds to 23S rRNA in the presence of protein L20. In Xanthomonas oryzae pv. oryzae (strain MAFF 311018), this protein is Large ribosomal subunit protein bL21.